A 461-amino-acid polypeptide reads, in one-letter code: Alpha-L-fucosidase (461 aa).

The N-terminal stretch at 1–18 is a signal peptide; it reads MKMIIIFFILLILNLIKS.

The protein belongs to the glycosyl hydrolase 29 family.

The catalysed reaction is an alpha-L-fucoside + H2O = L-fucose + an alcohol. Alpha-L-fucosidase is responsible for hydrolyzing the alpha-1,6-linked fucose joined to the reducing-end N-acetylglucosamine of the carbohydrate moieties of glycoproteins. This Dictyostelium discoideum (Social amoeba) protein is Alpha-L-fucosidase (alfA).